The following is a 326-amino-acid chain: Malate dehydrogenase (326 aa).

Position 11-17 (glycine 11–glycine 17) interacts with NAD(+). 2 residues coordinate substrate: arginine 92 and arginine 98. Residues asparagine 105, glutamine 112, and valine 129–asparagine 131 each bind NAD(+). Substrate-binding residues include asparagine 131 and arginine 162. Histidine 187 serves as the catalytic Proton acceptor.

The protein belongs to the LDH/MDH superfamily. MDH type 2 family.

The catalysed reaction is (S)-malate + NAD(+) = oxaloacetate + NADH + H(+). In terms of biological role, catalyzes the reversible oxidation of malate to oxaloacetate. The sequence is that of Malate dehydrogenase from Halorhodospira halophila (strain DSM 244 / SL1) (Ectothiorhodospira halophila (strain DSM 244 / SL1)).